Reading from the N-terminus, the 370-residue chain is Probable butyrate kinase (370 aa).

Belongs to the acetokinase family.

The protein localises to the cytoplasm. It catalyses the reaction butanoate + ATP = butanoyl phosphate + ADP. The protein is Probable butyrate kinase of Elusimicrobium minutum (strain Pei191).